Here is a 344-residue protein sequence, read N- to C-terminus: Follistatin (344 aa).

An N-terminal signal peptide occupies residues 1–29 (MVCARHQPGGLCLLLLLLCQFMEDRSAQA). A TB domain is found at 30 to 103 (GNCWLRQAKN…TCENVDCGPG (74 aa)). Disulfide bonds link Cys-32–Cys-55, Cys-42–Cys-88, Cys-56–Cys-91, Cys-95–Cys-106, Cys-100–Cys-116, Cys-118–Cys-150, Cys-122–Cys-143, Cys-132–Cys-164, Cys-168–Cys-179, Cys-173–Cys-189, Cys-192–Cys-225, Cys-196–Cys-218, Cys-207–Cys-239, Cys-245–Cys-256, Cys-250–Cys-267, Cys-270–Cys-302, Cys-274–Cys-295, and Cys-284–Cys-316. The Follistatin-like 1 domain occupies 94-117 (TCENVDCGPGKKCRMNKKNKPRCV). Positions 112–166 (NKPRCVCAPDCSNITWKGPVCGLDGKTYRNECALLKARCKEQPELEVQYQGKCKK) constitute a Kazal-like 1 domain. N-linked (GlcNAc...) asparagine glycosylation occurs at Asn-124. A Follistatin-like 2 domain is found at 167–190 (TCRDVFCPGSSTCVVDQTNNAYCV). The 56-residue stretch at 186 to 241 (NAYCVTCNRICPEPSSSEQYLCGNDGVTYSSACHLRKATCLLGRSIGLAYEGKCIK) folds into the Kazal-like 2 domain. One can recognise a Follistatin-like 3 domain in the interval 244-268 (SCEDIQCGGGKKCLWDSKVGRGRCS). Residues 264-318 (RGRCSLCDELCPDSKSDEPVCASDNATYASECAMKEAACSSGVLLEVKHSGSCNS) enclose the Kazal-like 3 domain. Asn-288 carries N-linked (GlcNAc...) asparagine glycosylation. Residues 315–344 (SCNSISEETEEEEEEEDQDYSFPISSILEW) are disordered. Residues 321–333 (EETEEEEEEEDQD) are compositionally biased toward acidic residues.

In terms of assembly, interacts with GDF11. Interacts with activin A/INHBA. Interacts with myostatin/MSTN.

It localises to the secreted. It is found in the nucleus. The protein resides in the nucleolus. Multifunctional regulatory protein whose primary function is to antagonize members of the transforming growth factor beta (TGF-beta) superfamily including activin, myostatin, GDF11 or bone morphogenetic proteins (BMPs). Mechanistically, binds to these ligands in the extracellular space, blocking their type II receptor-binding site to inhibit downstream signaling. Plays an essential role in muscle fiber formation and growth both by preventing the repressive effects of myostatin and through SMAD3/AKT/mTOR signaling independently of myostatin. Also promotes neural differentiation by antagonizing the action BMP4. Acts as a specific inhibitor of the biosynthesis and secretion of pituitary follicle stimulating hormone (FSH) by sequestering activin A/INHBA. On the other hand, translocates into the nucleus where it down-regulates rRNA synthesis and ribosome biogenesis to maintain cellular energy homeostasis by binding to rDNA. The sequence is that of Follistatin from Mus musculus (Mouse).